The primary structure comprises 297 residues: Formylmethanofuran--tetrahydromethanopterin formyltransferase (297 aa).

Belongs to the FTR family. In terms of assembly, homotetramer.

It is found in the cytoplasm. It carries out the reaction N-formylmethanofuran + 5,6,7,8-tetrahydromethanopterin + H(+) = N(5)-formyl-5,6,7,8-tetrahydromethanopterin + methanofuran. Its pathway is one-carbon metabolism; methanogenesis from CO(2); 5,10-methenyl-5,6,7,8-tetrahydromethanopterin from CO(2): step 2/3. Functionally, catalyzes the reversible transfer of a formyl group from formylmethanofuran (formyl-MFR) to tetrahydromethanopterin (H(4)MPT) to produce 5-formyl tetrahydromethanopterin (5-formyl-H(4)MPT) and methanofuran (MFR). In Methanothermus fervidus (strain ATCC 43054 / DSM 2088 / JCM 10308 / V24 S), this protein is Formylmethanofuran--tetrahydromethanopterin formyltransferase.